A 401-amino-acid polypeptide reads, in one-letter code: MDRRRMPLWALLLLWSPCTFSLPTGTTFERIPLKKMPSVREILEERGVDMTRLSAEWDVFTKRSSLTDLISPVVLTNYLNSQYYGEIGIGTPPQTFKVIFDTGSANLWVPSTKCSRLYLACGIHSLYESSDSSSYMENGDDFTIHYGSGRVKGFLSQDSVTVGGITVTQTFGEVTELPLIPFMLAQFDGVLGMGFPAQAVGGVTPVFDHILSQGVLKEKVFSVYYNRGPHLLGGEVVLGGSDPEHYQGDFHYVSLSKTDSWQITMKGVSVGSSTLLCEEGCEVVVDTGSSFISAPTSSLKLIMQALGAKEKRLHEYVVSCSQVPTLPDISFNLGGRAYTLSSTDYVLQYPNRRDKLCTVALHAMDIPPPTGPVWVLGATFIRKFYTEFDRHNNRIGFALAR.

The N-terminal stretch at 1 to 25 (MDRRRMPLWALLLLWSPCTFSLPTG) is a signal peptide. The propeptide at 26-63 (TTFERIPLKKMPSVREILEERGVDMTRLSAEWDVFTKR) is activation peptide. One can recognise a Peptidase A1 domain in the interval 83–398 (YYGEIGIGTP…DRHNNRIGFA (316 aa)). Residue Asp-101 is part of the active site. 2 disulfides stabilise this stretch: Cys-114–Cys-121 and Cys-277–Cys-281. Asp-286 is a catalytic residue. Residues Cys-320 and Cys-357 are joined by a disulfide bond.

This sequence belongs to the peptidase A1 family. As to quaternary structure, dimer of a heavy chain and a light chain joined by a disulfide bond. As to expression, submandibular gland.

It is found in the secreted. The enzyme catalyses Cleavage of Leu-|-Xaa bond in angiotensinogen to generate angiotensin I.. Functionally, renin is a highly specific endopeptidase, related to pepsin, whose only known function is to generate angiotensin I from angiotensinogen in the plasma, initiating a cascade of reactions that produce an elevation of blood pressure and increased sodium retention by the kidney. The protein is Renin-2 of Mus musculus (Mouse).